Here is a 158-residue protein sequence, read N- to C-terminus: Fluoride-specific ion channel FluC 2 (158 aa).

4 consecutive transmembrane segments (helical) span residues 25 to 45 (AWHG…IGGT), 63 to 83 (WTTF…MVVI), 95 to 115 (PFFG…AVDI), and 126 to 146 (TALA…RLAA). The Na(+) site is built by Gly-103 and Thr-106.

Belongs to the fluoride channel Fluc/FEX (TC 1.A.43) family.

The protein localises to the cell membrane. The catalysed reaction is fluoride(in) = fluoride(out). Its activity is regulated as follows. Na(+) is not transported, but it plays an essential structural role and its presence is essential for fluoride channel function. In terms of biological role, fluoride-specific ion channel. Important for reducing fluoride concentration in the cell, thus reducing its toxicity. The polypeptide is Fluoride-specific ion channel FluC 2 (Streptomyces avermitilis (strain ATCC 31267 / DSM 46492 / JCM 5070 / NBRC 14893 / NCIMB 12804 / NRRL 8165 / MA-4680)).